A 383-amino-acid polypeptide reads, in one-letter code: Acetylornithine deacetylase (383 aa).

Position 80 (His-80) interacts with Zn(2+). Asp-82 is a catalytic residue. Zn(2+) is bound at residue Asp-112. Glu-144 is a catalytic residue. Glu-145, Glu-169, and His-355 together coordinate Zn(2+).

The protein belongs to the peptidase M20A family. ArgE subfamily. As to quaternary structure, homodimer. It depends on Zn(2+) as a cofactor. Co(2+) serves as cofactor. The cofactor is glutathione.

The protein localises to the cytoplasm. It carries out the reaction N(2)-acetyl-L-ornithine + H2O = L-ornithine + acetate. Its pathway is amino-acid biosynthesis; L-arginine biosynthesis; L-ornithine from N(2)-acetyl-L-ornithine (linear): step 1/1. Functionally, catalyzes the hydrolysis of the amide bond of N(2)-acetylated L-amino acids. Cleaves the acetyl group from N-acetyl-L-ornithine to form L-ornithine, an intermediate in L-arginine biosynthesis pathway, and a branchpoint in the synthesis of polyamines. In Shigella flexneri serotype 5b (strain 8401), this protein is Acetylornithine deacetylase.